The following is a 203-amino-acid chain: Large ribosomal subunit protein bL25 (203 aa).

A disordered region spans residues 1–21 (MMENLQVNQREKKTRHSSRQC). Residues 12–21 (KKTRHSSRQC) are compositionally biased toward basic residues.

It belongs to the bacterial ribosomal protein bL25 family. CTC subfamily. As to quaternary structure, part of the 50S ribosomal subunit; part of the 5S rRNA/L5/L18/L25 subcomplex. Contacts the 5S rRNA. Binds to the 5S rRNA independently of L5 and L18.

Its function is as follows. This is one of the proteins that binds to the 5S RNA in the ribosome where it forms part of the central protuberance. This is Large ribosomal subunit protein bL25 from Clostridium perfringens (strain 13 / Type A).